The following is a 309-amino-acid chain: Phytoene synthase (309 aa).

This sequence belongs to the phytoene/squalene synthase family. The cofactor is ATP. Mn(2+) is required as a cofactor. It depends on Mg(2+) as a cofactor.

Its pathway is carotenoid biosynthesis; phytoene biosynthesis. Functionally, involved in the biosynthesis of carotenoids. Catalyzes the condensation of two molecules of geranylgeranyl diphosphate (GGPP) to give prephytoene diphosphate (PPPP) and the subsequent rearrangement of the cyclopropylcarbinyl intermediate to yield phytoene. The protein is Phytoene synthase (crtB) of Pseudescherichia vulneris (Escherichia vulneris).